The sequence spans 54 residues: Ovomucoid (54 aa).

The Kazal-like domain occupies valine 4 to cysteine 54. 3 disulfide bridges follow: cysteine 6–cysteine 36, cysteine 14–cysteine 33, and cysteine 22–cysteine 54. Asparagine 43 is a glycosylation site (N-linked (GlcNAc...) asparagine).

It localises to the secreted. In Dendrocygna viduata (White-faced whistling-duck), this protein is Ovomucoid.